Consider the following 294-residue polypeptide: Factor associated with metabolism and energy (294 aa).

Basic residues predominate over residues 1–12 (MGLGHSKAHPRV). 2 disordered regions span residues 1-28 (MGLG…TPST) and 255-279 (FWDS…LVRT). Residue Gly2 is the site of N-myristoyl glycine attachment. Over residues 17–28 (PLQSQETETPST) the composition is skewed to polar residues. The span at 268 to 279 (KDERRPQALVRT) shows a compositional bias: basic and acidic residues.

As to expression, expressed in proximal tubules of the kidney.

Its subcellular location is the cell membrane. It localises to the cytoplasmic vesicle. In terms of biological role, may be involved in tuning the metabolism, energy expenditure, and excretion processes. The polypeptide is Factor associated with metabolism and energy (Mus musculus (Mouse)).